We begin with the raw amino-acid sequence, 1291 residues long: MAGAASPCANGCGPSAPSDAEVVHLCRSLEVGTVMTLFYSKKSQRPERKTFQVKLETRQITWSRGADKIEGAIDIREIKEIRPGKTSRDFDRYQEDPAFRPDQSHCFVILYGMEFRLKTLSLQATSEDEVNMWIRGLTWLMEDTLQAATPLQIERWLRKQFYSVDRNREDRISAKDLKNMLSQVNYRVPNMRFLRERLTDLEQRTSDITYGQFAQLYRSLMYSAQKTMDLPFLEASALRAGERPELCRVSLPEFQQFLLEYQGELWAVDRLQVQEFMLSFLRDPLREIEEPYFFLDEFVTFLFSKENSIWNSQLDEVCPDTMNNPLSHYWISSSHNTYLTGDQFSSESSLEAYARCLRMGCRCIELDCWDGPDGMPVIYHGHTLTTKIKFSDVLHTIKEHAFVASEYPVILSIEDHCSIAQQRNMAQYFKKVLGDTLLTKPVDIAADGLPSPNQLKRKILIKHKKLAEGSAYEEVPTSVMYSENDISNSIKNGILYLEDPVNHEWYPHYFVLTSSKIYYSEETSSDQGNEDEEEPKEASGSTELHSNEKWFHGKLGAGRDGRHIAERLLTEYCIETGAPDGSFLVRESETFVGDYTLSFWRNGKVQHCRIHSRQDAGTPKFFLTDNLVFDSLYDLITHYQQVPLRCNEFEMRLSEPVPQTNAHESKEWYHASLTRAQAEHMLMRVPRDGAFLVRKRNEPNSYAISFRAEGKIKHCRVQQEGQTVMLGNSEFDSLVDLISYYEKHPLYRKMKLRYPINEEALEKIGTAEPDYGALYEGRNPGFYVEANPMPTFKCAVKALFDYKAQREDELTFTKSAIIQNVEKQEGGWWRGDYGGKKQLWFPSNYVEEMVSPAALEPEREHLDENSPLGDLLRGVLDVPACQIAVRPEGKNNRLFVFSISMASVAHWSLDVAADSQEELQDWVKKIREVAQTADARLTEGKMMERRKKIALELSELVVYCRPVPFDEEKIGTERACYRDMSSFPETKAEKYVNKAKGKKFLQYNRLQLSRIYPKGQRLDSSNYDPLPMWICGSQLVALNFQTPDKPMQMNQALFLAGGHCGYVLQPSVMRDEAFDPFDKSSLRGLEPCAICIEVLGARHLPKNGRGIVCPFVEIEVAGAEYDSIKQKTEFVVDNGLNPVWPAKPFHFQISNPEFAFLRFVVYEEDMFSDQNFLAQATFPVKGLKTGYRAVPLKNNYSEGLELASLLVKIDVFPAKQENGDLSPFGGASLRERSCDASGPLFHGRAREGSFEARYQQPFEDFRISQEHLADHFDGRDRRTPRRTRVNGDNRL.

A2 carries the post-translational modification N-acetylalanine. A PH 1 domain is found at R27–E142. One can recognise an EF-hand domain in the interval Q152 to R187. D165, N167, E169, R171, and D176 together coordinate Ca(2+). The region spanning D320–K464 is the PI-PLC X-box domain. Catalysis depends on residues H335 and H380. One can recognise a PH 2; first part domain in the interval S489–T523. The residue at position 506 (Y506) is a Phosphotyrosine. Positions E522–L544 are disordered. SH2 domains are found at residues W550 to V657 and W668 to I756. The residue at position 771 (Y771) is a Phosphotyrosine; by SYK. Phosphotyrosine is present on residues Y775 and Y783. Y783 bears the Phosphotyrosine; by ITK, SYK and TXK mark. Positions T791–S851 constitute an SH3 domain. The region spanning F895–Q931 is the PH 2; second part domain. Positions L953 to R1070 constitute a PI-PLC Y-box domain. Y977 bears the Phosphotyrosine mark. The region spanning D1071 to N1194 is the C2 domain. Phosphoserine occurs at positions 1222, 1228, and 1249. Phosphotyrosine is present on Y1254. S1264 is modified (phosphoserine). The segment at H1271–L1291 is disordered.

Interacts with AGAP2 via its SH3 domain. Interacts (via SH2 domain) with RET. Interacts with FLT1 (tyrosine-phosphorylated). Interacts (via SH2 domain) with FGFR1, FGFR2, FGFR3 and FGFR4 (phosphorylated). Interacts with LAT (phosphorylated) upon TCR activation. Interacts (via SH3 domain) with the Pro-rich domain of TNK1. Associates with BLNK, VAV1, GRB2 and NCK1 in a B-cell antigen receptor-dependent fashion. Interacts with CBLB in activated T-cells; which inhibits phosphorylation. Interacts with SHB. Interacts (via SH3 domain) with the Arg/Gly-rich-flanked Pro-rich domains of KHDRBS1/SAM68. This interaction is selectively regulated by arginine methylation of KHDRBS1/SAM68. Interacts with INPP5D/SHIP1, THEMIS and CLNK. Interacts with AXL, FLT4 and KIT. Interacts with RALGPS1. Interacts (via the SH2 domains) with VIL1 (phosphorylated at C-terminus tyrosine phosphorylation sites). Interacts (via SH2 domain) with PDGFRA and PDGFRB (tyrosine phosphorylated). Interacts with PIP5K1C. Interacts with NTRK1 and NTRK2 (phosphorylated upon ligand-binding). Interacts with SYK; activates PLCG1. Interacts with GRB2, LAT and THEMIS upon TCR activation in thymocytes. Interacts with TESPA1; the association is increased with prolonged stimulation of the TCR and may facilitate the assembly of the LAT signalosome. Interacts (via C-terminal proline-rich domain (PRD)) with PLCG1 (via SH3 domain); this interaction leads to guanine nucleotide exchange from PlCG1 to DNM1 and enhances DNM1-dependent endocytosis. Requires Ca(2+) as cofactor. Ubiquitinated by CBLB in activated T-cells. Post-translationally, tyrosine phosphorylated in response to signaling via activated FLT3, KIT and PDGFRA. Tyrosine phosphorylated by activated FGFR1, FGFR2, FGFR3 and FGFR4. Tyrosine phosphorylated by activated FLT1 and KDR. Tyrosine phosphorylated by activated PDGFRB. The receptor-mediated activation of PLCG1 involves its phosphorylation by tyrosine kinases, in response to ligation of a variety of growth factor receptors and immune system receptors. For instance, SYK phosphorylates and activates PLCG1 in response to ligation of the B-cell receptor. May be dephosphorylated by PTPRJ. Phosphorylated by ITK and TXK on Tyr-783 upon TCR activation in T-cells.

Its subcellular location is the cell projection. It is found in the lamellipodium. It localises to the ruffle. The catalysed reaction is a 1,2-diacyl-sn-glycero-3-phospho-(1D-myo-inositol-4,5-bisphosphate) + H2O = 1D-myo-inositol 1,4,5-trisphosphate + a 1,2-diacyl-sn-glycerol + H(+). It carries out the reaction a 1,2-diacyl-sn-glycero-3-phospho-(1D-myo-inositol) + H2O = 1D-myo-inositol 1-phosphate + a 1,2-diacyl-sn-glycerol + H(+). With respect to regulation, activated by phosphorylation on tyrosine residues. In terms of biological role, mediates the production of the second messenger molecules diacylglycerol (DAG) and inositol 1,4,5-trisphosphate (IP3). Plays an important role in the regulation of intracellular signaling cascades. Becomes activated in response to ligand-mediated activation of receptor-type tyrosine kinases, such as PDGFRA, PDGFRB, EGFR, FGFR1, FGFR2, FGFR3 and FGFR4. Plays a role in actin reorganization and cell migration. Guanine nucleotide exchange factor that binds the GTPase DNM1 and catalyzes the dissociation of GDP, allowing a GTP molecule to bind in its place, therefore enhancing DNM1-dependent endocytosis. This chain is 1-phosphatidylinositol 4,5-bisphosphate phosphodiesterase gamma-1, found in Bos taurus (Bovine).